A 732-amino-acid polypeptide reads, in one-letter code: E3 ubiquitin-protein ligase hel2 (732 aa).

Residues 1–48 (MSPSGPNLNNKEHNRASEKKNSRTHNKKTNRNQSKEKPVSSRSVETPK) form a disordered region. The span at 10–21 (NKEHNRASEKKN) shows a compositional bias: basic and acidic residues. Residues 81 to 121 (CFICAEGITYSCVLPCNHRMCHVCALRLRALYKTKECTFCK) form an RING-type zinc finger. An LIM zinc-binding domain is found at 245–315 (PKCEFCNTHF…RECLERKFVV (71 aa)). 3 disordered regions span residues 345-380 (IIPQ…NETA), 411-501 (DFGF…QHQQ), and 623-732 (HDGP…FHIG). Composition is skewed to polar residues over residues 366 to 380 (SSTP…NETA) and 415 to 433 (TLSN…TRTI). Low complexity predominate over residues 457-468 (SSSAPSVPVSAP). The residue at position 482 (Ser482) is a Phosphoserine. 2 stretches are compositionally biased toward polar residues: residues 490 to 501 (PMASSEQAQHQQ) and 629 to 654 (SAPS…NTPS). Low complexity predominate over residues 701–713 (STPNTSSNRNSNT).

Belongs to the ZNF598/HEL2 family.

The protein localises to the cytoplasm. It carries out the reaction S-ubiquitinyl-[E2 ubiquitin-conjugating enzyme]-L-cysteine + [acceptor protein]-L-lysine = [E2 ubiquitin-conjugating enzyme]-L-cysteine + N(6)-ubiquitinyl-[acceptor protein]-L-lysine.. It functions in the pathway protein modification; protein ubiquitination. Functionally, E3 ubiquitin-protein ligase that plays a key role in the ribosome quality control (RQC), a pathway that takes place when a ribosome has stalled during translation, leading to degradation of nascent peptide chains. Activated when ribosomes are stalled within an mRNA following translation of prematurely polyadenylated mRNAs. Acts as a ribosome collision sensor: specifically recognizes and binds collided ribosome and ubiquitinates the 40S ribosomal proteins rps20/uS10 and rps3/uS3. Catalyzes 'Lys-63'-linked polyubiquitination of rps20/uS10, promoting recruitment of the RQT (ribosome quality control trigger) complex, which drives the disassembly of stalled ribosomes, followed by degradation of nascent peptides. The protein is E3 ubiquitin-protein ligase hel2 of Schizosaccharomyces pombe (strain 972 / ATCC 24843) (Fission yeast).